Consider the following 156-residue polypeptide: Small ribosomal subunit protein bS16 (156 aa).

The disordered stretch occupies residues 114-156 (ENEPVAEAITPKKKKAAKADEAKAEDTAADAEAPAADAEAADK). The span at 130–139 (AKADEAKAED) shows a compositional bias: basic and acidic residues. Positions 143-156 (DAEAPAADAEAADK) are enriched in low complexity.

The protein belongs to the bacterial ribosomal protein bS16 family.

The protein is Small ribosomal subunit protein bS16 of Rhodococcus erythropolis (strain PR4 / NBRC 100887).